We begin with the raw amino-acid sequence, 345 residues long: MKQLKRKRKSNFSVQETQTLLKEITKRKEVIFSKQLNTTINVMKRMAWEEIAQCVNAVGEGEQRTGTEVKRRYLDWRALMKRKRMKANIKLVGSGFPLPSSDLDDSLTEEIDEKIGFRNDANFDWQNVADFRDAGGSLTEVKVEEEERDPQSPEFEIEEEEEMLSSVIPDSRRENELPDFPHIDEFFTLNSTPSRSAYDEPHLLVNIEKQKLELEKRRLDIEAERLQVEKERLQIEKERLRHLDMEHERLQLEKERLQIEREKLRLQIVNSEKPSLENELGQGEKSMLQPQDIETEKLKLERERLQLEKDRLQFLKFESEKLQIEKERLQVEKDRLRIQKEGHLQ.

The 74-residue stretch at 4–77 (LKRKRKSNFS…EVKRRYLDWR (74 aa)) folds into the Myb-like domain. Residue Lys9 forms a Glycyl lysine isopeptide (Lys-Gly) (interchain with G-Cter in SUMO2) linkage. Ser106 carries the post-translational modification Phosphoserine. Residues Lys114 and Lys142 each participate in a glycyl lysine isopeptide (Lys-Gly) (interchain with G-Cter in SUMO2) cross-link. Positions 143–175 (VEEEERDPQSPEFEIEEEEEMLSSVIPDSRREN) are disordered. Thr188 is subject to Phosphothreonine. Residues 203 to 345 (LLVNIEKQKL…LRIQKEGHLQ (143 aa)) adopt a coiled-coil conformation. Residues Lys237, Lys254, and Lys273 each participate in a glycyl lysine isopeptide (Lys-Gly) (interchain with G-Cter in SUMO2) cross-link.

The chain is Myb/SANT-like DNA-binding domain-containing protein 4 (MSANTD4) from Homo sapiens (Human).